Consider the following 120-residue polypeptide: Putative monooxygenase GME11364 (120 aa).

In terms of domain architecture, ABM spans 9 to 99; it reads VSVHIRLTVD…ILLKPHEVEL (91 aa).

It belongs to the LsrG family.

The protein operates within secondary metabolite biosynthesis. In terms of biological role, putative monooxygenase; part of the gene cluster that mediates the biosynthesis of dibenzodioxocinones such as pestalotiollide B, a novel class of inhibitors against cholesterol ester transfer protein (CEPT). The biosynthesis initiates from condensation of acetate and malonate units catalyzed by the non-reducing PKS pks8/GME11356. Pks8/GME11356 lacks a thioesterase (TE) domain, which is important to the cyclizing of the third ring of atrochrysone carboxylic acid, and the esterase GME11355 might play the role of TE and catalyzes the cyclization reaction of the C ring. The lactamase-like protein GME11357 (or other beta-lactamases in Pestalotiopsis microspora) probably hydrolyzes the thioester bond between the ACP of pks8/GME11356 and the intermediate to release atrochrysone carboxylic acid, which is spontaneously dehydrates to form endocrocin anthrone. Endocrocin anthrone is further converted to emodin via the endocrocin intermediate. Emodin is then oxidized by several enzymes such as the Baeyer-Villiger oxidase GME11358, the oxidoreductase GME11367, the short chain dehydrogenase/reductase GME11373, as well as by other oxidoreductases from the cluster, to modify the A and C rings and open the B ring, and finally yield monodictyphenone. The prenyltransferase GME11375 may catalyze the addition reaction between the C5 side chains and the carbon bone of dibenzodioxocinones. The remaining biochemical reactions to the final product dibenzodioxocinones should be methylation catalyzed by methyltransferase GME11366 and reduction and lactonization reaction catalyzed by a series of oxidordeuctases. The chain is Putative monooxygenase GME11364 from Pestalotiopsis microspora.